A 485-amino-acid polypeptide reads, in one-letter code: E3 ubiquitin-protein ligase TRIM34B (485 aa).

The segment at 15-58 adopts an RING-type zinc-finger fold; that stretch reads CPVCQELLTKALSLGCGHLVCQACLISNKNAVINPRGKSSCPVC. The B box-type zinc finger occupies 91–127; it reads TKRDLCVHHGEKLLLFCKEDKKVICWVCERSQEHRGH. Residues Cys-96, His-99, Cys-118, and His-124 each contribute to the Zn(2+) site. Residues 136–170 are a coiled coil; the sequence is VRECQENLQKALTRLRKEQEKVETLEADIKEDRLS. The region spanning 282-485 is the B30.2/SPRY domain; that stretch reads LSGMLQKFRE…APMTLCPLNS (204 aa).

It belongs to the TRIM/RBCC family. Homotrimer. Interacts (via B-box and SPRY domain) with TRIM5.

The protein resides in the cytoplasm. Its subcellular location is the mitochondrion. The catalysed reaction is S-ubiquitinyl-[E2 ubiquitin-conjugating enzyme]-L-cysteine + [acceptor protein]-L-lysine = [E2 ubiquitin-conjugating enzyme]-L-cysteine + N(6)-ubiquitinyl-[acceptor protein]-L-lysine.. The protein operates within protein modification; protein ubiquitination. In terms of biological role, functions as antiviral protein and contributes to the defense against retroviral infections. Acts as a capsid-specific restriction factor with the help of TRIM5 and prevents infection from non-host-adapted retroviruses. During influenza A virus infection, promotes programmed cell death by targeting ZBP1 for 'Lys-63'-linked polyubiquitination. In turn, promotes ZBP1 recruitment of RIPK3 to mediate virus-induced programmed necrosis. Negatively regulates the function of mitochondria by enhancing mitochondrial depolarization leading to cytochrome c release and mitochondria-dependent apoptosis. Also promotes the formation of multinucleated giant cells by means of cell fusion and phagocytosis in epithelial cells. Regulates intestinal inflammation by controlling the exocytosis of the major component of colonic mucus MUC2 from colonic goblet cells. The polypeptide is E3 ubiquitin-protein ligase TRIM34B (Mus musculus (Mouse)).